A 223-amino-acid chain; its full sequence is Phosphoribosylformylglycinamidine synthase subunit PurQ (223 aa).

The Glutamine amidotransferase type-1 domain maps to 3–223 (FAVLVFPGSN…MVKSWREQHV (221 aa)). Cys85 (nucleophile) is an active-site residue. Catalysis depends on residues His193 and Glu195.

In terms of assembly, part of the FGAM synthase complex composed of 1 PurL, 1 PurQ and 2 PurS subunits.

The protein localises to the cytoplasm. It carries out the reaction N(2)-formyl-N(1)-(5-phospho-beta-D-ribosyl)glycinamide + L-glutamine + ATP + H2O = 2-formamido-N(1)-(5-O-phospho-beta-D-ribosyl)acetamidine + L-glutamate + ADP + phosphate + H(+). The enzyme catalyses L-glutamine + H2O = L-glutamate + NH4(+). Its pathway is purine metabolism; IMP biosynthesis via de novo pathway; 5-amino-1-(5-phospho-D-ribosyl)imidazole from N(2)-formyl-N(1)-(5-phospho-D-ribosyl)glycinamide: step 1/2. Part of the phosphoribosylformylglycinamidine synthase complex involved in the purines biosynthetic pathway. Catalyzes the ATP-dependent conversion of formylglycinamide ribonucleotide (FGAR) and glutamine to yield formylglycinamidine ribonucleotide (FGAM) and glutamate. The FGAM synthase complex is composed of three subunits. PurQ produces an ammonia molecule by converting glutamine to glutamate. PurL transfers the ammonia molecule to FGAR to form FGAM in an ATP-dependent manner. PurS interacts with PurQ and PurL and is thought to assist in the transfer of the ammonia molecule from PurQ to PurL. The sequence is that of Phosphoribosylformylglycinamidine synthase subunit PurQ from Staphylococcus aureus (strain MSSA476).